Here is a 123-residue protein sequence, read N- to C-terminus: Zinc metalloproteinase-disintegrin-like jerdohagin (123 aa).

A Peptidase M12B domain is found at 6–52 (RYLYIRHDREACTCHANSCIMSAYFSNSHVQYENYINDCKPQCILNE). Position 12 (His12) interacts with Zn(2+). Cys19 and Cys24 are oxidised to a cystine. Positions 48 and 51 each coordinate Ca(2+). One can recognise a Disintegrin domain in the interval 53–80 (LHSWVECESGECCEQCRSECDIAESCTN). 4 cysteine pairs are disulfide-bonded: Cys59/Cys65, Cys64/Cys78, Cys72/Cys90, and Cys106/Cys116. The D/ECD-tripeptide signature appears at 71–73 (ECD).

This sequence belongs to the venom metalloproteinase (M12B) family. P-III subfamily. P-IIIa sub-subfamily. Monomer. It depends on Zn(2+) as a cofactor. Post-translationally, the N-terminus is blocked. In terms of tissue distribution, expressed by the venom gland.

It localises to the secreted. With respect to regulation, its proteolytic and hemorrhagic activities are inhibited by EDTA, but not by PMSF. Functionally, snake venom metalloproteinase that has high hemorrhagic activity and degrades the alpha-chain of fibrinogen (FGA), leaving the beta- and the gamma-chain intact. It may also inhibit platelet aggregation. Cleaves insulin B chain at '25-Phe-|-Val-26', '26-Val-|-Asn-27', '29-His-|-Leu-30', '30-Leu-|-Cys-31', '33-Ser-|-His-34', '35-Leu-|-Val-36', '40-Tyr-|-Leu-41', '41-Leu-|-Val-42', '42-Val-|-Cys-43', '43-Cys-|-Gly-44', '44-Gly-|-Glu-45', '46-Arg-|-Gly-47', '47-Gly-|-Phe-48', '49-Phe-|-Tyr-50' and '52-Pro-|-Lys-53' bonds. Also cleaves human prothrombin (72 kDa) and activation fragment F1 (27 kDa) of activated human prothrombin, to generate two new proteins of 68 and 23 kDa. The polypeptide is Zinc metalloproteinase-disintegrin-like jerdohagin (Protobothrops jerdonii (Jerdon's pitviper)).